We begin with the raw amino-acid sequence, 439 residues long: Ribosomal protein uS12 methylthiotransferase RimO (439 aa).

The 113-residue stretch at 3–115 (KKLHLISLGC…IDQMVRERQG (113 aa)) folds into the MTTase N-terminal domain. Residues C12, C46, C78, C147, C151, and C154 each contribute to the [4Fe-4S] cluster site. The Radical SAM core domain maps to 133–362 (TGSSVHAYVK…DKIIQKQHRA (230 aa)).

This sequence belongs to the methylthiotransferase family. RimO subfamily. [4Fe-4S] cluster is required as a cofactor.

The protein localises to the cytoplasm. It catalyses the reaction L-aspartate(89)-[ribosomal protein uS12]-hydrogen + (sulfur carrier)-SH + AH2 + 2 S-adenosyl-L-methionine = 3-methylsulfanyl-L-aspartate(89)-[ribosomal protein uS12]-hydrogen + (sulfur carrier)-H + 5'-deoxyadenosine + L-methionine + A + S-adenosyl-L-homocysteine + 2 H(+). Functionally, catalyzes the methylthiolation of an aspartic acid residue of ribosomal protein uS12. The sequence is that of Ribosomal protein uS12 methylthiotransferase RimO from Wolinella succinogenes (strain ATCC 29543 / DSM 1740 / CCUG 13145 / JCM 31913 / LMG 7466 / NCTC 11488 / FDC 602W) (Vibrio succinogenes).